A 131-amino-acid chain; its full sequence is Arsenate reductase 2 (131 aa).

Catalysis depends on nucleophile residues Cys10, Cys82, and Cys89. Intrachain disulfides connect Cys10/Cys82 and Cys82/Cys89.

This sequence belongs to the low molecular weight phosphotyrosine protein phosphatase family. Thioredoxin-coupled ArsC subfamily.

It is found in the cytoplasm. The enzyme catalyses arsenate + [thioredoxin]-dithiol + H(+) = arsenite + [thioredoxin]-disulfide + H2O. Its function is as follows. Catalyzes the reduction of arsenate [As(V)] to arsenite [As(III)]. This is Arsenate reductase 2 from Staphylococcus saprophyticus subsp. saprophyticus (strain ATCC 15305 / DSM 20229 / NCIMB 8711 / NCTC 7292 / S-41).